The primary structure comprises 320 residues: Short-chain dehydrogenase TIC 32 A, chloroplastic (320 aa).

NADP(+) is bound by residues 40–46, 92–93, Asn-119, and Thr-140; these read GGTSGIG and DL. Substrate is bound at residue Ser-174. The active-site Proton acceptor is the Tyr-196. The interaction with calmodulin stretch occupies residues 301–317; that stretch reads DTTLADKLWDFSIKLVE.

The protein belongs to the short-chain dehydrogenases/reductases (SDR) family. In terms of assembly, part of the Tic complex. Expressed in the dehiscence zone of developing pods.

It is found in the plastid. Its subcellular location is the chloroplast inner membrane. Its function is as follows. Involved in protein precursor import into chloroplasts. Maybe involved in pod abscission or dehiscence (pod shatter). This chain is Short-chain dehydrogenase TIC 32 A, chloroplastic, found in Brassica napus (Rape).